The following is a 386-amino-acid chain: Pepsin A (386 aa).

An N-terminal signal peptide occupies residues 1–15 (MKWLLLISLVALSEC). Residues 16 to 60 (AIVKVPLVRKKSLRQNLIEHGLLNDFLKNQSPNPASKYFPQEPTV) constitute a propeptide, activation peptide. The Peptidase A1 domain maps to 74–383 (YFGTIGIGTP…DRANNQVGLA (310 aa)). Asp92 is a catalytic residue. Cystine bridges form between Cys105-Cys110 and Cys266-Cys270. Asp275 is an active-site residue. A disulfide bridge connects residues Cys309 and Cys342.

It belongs to the peptidase A1 family.

Its subcellular location is the secreted. It catalyses the reaction Preferential cleavage: hydrophobic, preferably aromatic, residues in P1 and P1' positions. Cleaves 1-Phe-|-Val-2, 4-Gln-|-His-5, 13-Glu-|-Ala-14, 14-Ala-|-Leu-15, 15-Leu-|-Tyr-16, 16-Tyr-|-Leu-17, 23-Gly-|-Phe-24, 24-Phe-|-Phe-25 and 25-Phe-|-Tyr-26 bonds in the B chain of insulin.. Shows particularly broad specificity; although bonds involving phenylalanine and leucine are preferred, many others are also cleaved to some extent. This Canis lupus familiaris (Dog) protein is Pepsin A (PGA).